We begin with the raw amino-acid sequence, 309 residues long: tRNA uridine(34) hydroxylase (309 aa).

Residues Ser126 to Ser220 form the Rhodanese domain. Catalysis depends on Cys180, which acts as the Cysteine persulfide intermediate.

The protein belongs to the TrhO family.

The enzyme catalyses uridine(34) in tRNA + AH2 + O2 = 5-hydroxyuridine(34) in tRNA + A + H2O. Its function is as follows. Catalyzes oxygen-dependent 5-hydroxyuridine (ho5U) modification at position 34 in tRNAs. This Nostoc sp. (strain PCC 7120 / SAG 25.82 / UTEX 2576) protein is tRNA uridine(34) hydroxylase.